Reading from the N-terminus, the 322-residue chain is Cysteine protease yopT1 (322 aa).

Residues C139, H258, and D274 contribute to the active site.

It belongs to the peptidase C58 family. Interacts with human ARHA.

It localises to the secreted. Cysteine protease, which is translocated into infected cells and plays a central role in pathogenesis by cleaving the C-terminus end of the human small GTPase RhoA/ARHA, a regulator of cytoskeleton. Once cleaved, ARHA loses its lipid modification, and is released from the cell membrane, leading to the subsequent disruption of actin cytoskeleton of the host cell. This is Cysteine protease yopT1 (yopT1) from Yersinia enterocolitica.